A 632-amino-acid polypeptide reads, in one-letter code: Golgin subfamily A member 8H (632 aa).

The disordered stretch occupies residues 1–77; sequence MAEETQHNKL…SSATLKDLES (77 aa). 2 coiled-coil regions span residues 110 to 201 and 240 to 468; these read VEHQ…LSSR and ECAE…EKAD. Basic and acidic residues-rich tracts occupy residues 352–362 and 427–440; these read KQEERIQEQHK and HGGE…EEAP. Disordered stretches follow at residues 352–379, 423–452, and 496–524; these read KQEE…EPNN, PGEG…DPES, and LSEP…DEGE. Gly residues predominate over residues 508 to 520; it reads LGGGHHQAGAQGG.

The protein belongs to the GOLGA8 family.

The polypeptide is Golgin subfamily A member 8H (GOLGA8H) (Homo sapiens (Human)).